A 676-amino-acid chain; its full sequence is Periplasmic alpha-amylase (676 aa).

Residues 1-17 form the signal peptide; it reads MKLAACFLTLLPGFAVA. 2 disulfides stabilise this stretch: Cys57-Cys75 and Cys121-Cys537. Ca(2+) is bound at residue Asn314. Catalysis depends on Asp460, which acts as the Nucleophile. A Ca(2+)-binding site is contributed by His464. Catalysis depends on Glu503, which acts as the Proton donor.

The protein belongs to the glycosyl hydrolase 13 family. In terms of assembly, monomer. Ca(2+) is required as a cofactor.

It is found in the periplasm. It catalyses the reaction Endohydrolysis of (1-&gt;4)-alpha-D-glucosidic linkages in polysaccharides containing three or more (1-&gt;4)-alpha-linked D-glucose units.. In terms of biological role, since only maltooligosaccharides up to a chain length of 6 glucose units are actively transported through the cytoplasmic membrane via the membrane-bound complex of three proteins, MalF, MalG, and MalK, longer maltooligosaccharides must first be degraded by the periplasmic alpha-amylase, the MalS protein. The protein is Periplasmic alpha-amylase (malS) of Escherichia coli (strain K12).